The sequence spans 119 residues: NAD(P)H-quinone oxidoreductase subunit M (119 aa).

The protein belongs to the complex I NdhM subunit family. As to quaternary structure, NDH-1 can be composed of about 15 different subunits; different subcomplexes with different compositions have been identified which probably have different functions.

The protein resides in the cellular thylakoid membrane. It carries out the reaction a plastoquinone + NADH + (n+1) H(+)(in) = a plastoquinol + NAD(+) + n H(+)(out). The enzyme catalyses a plastoquinone + NADPH + (n+1) H(+)(in) = a plastoquinol + NADP(+) + n H(+)(out). Its function is as follows. NDH-1 shuttles electrons from an unknown electron donor, via FMN and iron-sulfur (Fe-S) centers, to quinones in the respiratory and/or the photosynthetic chain. The immediate electron acceptor for the enzyme in this species is believed to be plastoquinone. Couples the redox reaction to proton translocation, and thus conserves the redox energy in a proton gradient. Cyanobacterial NDH-1 also plays a role in inorganic carbon-concentration. The protein is NAD(P)H-quinone oxidoreductase subunit M of Gloeothece citriformis (strain PCC 7424) (Cyanothece sp. (strain PCC 7424)).